The sequence spans 599 residues: Nucleoporin p58/p45 (599 aa).

5 consecutive repeat copies span residues 7–8, 30–31, 44–45, 63–64, and 68–69. The interval 7-579 is 14 X 2 AA repeats of F-G; sequence FGSGTLGSTT…VSNPASAGFG (573 aa). The segment at 213-247 is disordered; the sequence is NEGLGGIDFSSSSDKKSDKTGTRPEDSKALKDENL. Positions 225-246 are enriched in basic and acidic residues; sequence SDKKSDKTGTRPEDSKALKDEN. Coiled coils occupy residues 256 to 276 and 314 to 381; these read ENLQKFVKEQKQVQEEISRMS and ETAQ…SHIT. Thr-331 carries the phosphothreonine modification. Tandem repeats lie at residues 488 to 489, 492 to 493, 513 to 514, 519 to 520, 529 to 530, 531 to 532, 545 to 546, 568 to 569, and 578 to 579. The disordered stretch occupies residues 579–599; sequence GTGGQLLQLKKPPAGNKRGKR.

The protein belongs to the NUP58 family. In terms of assembly, component of the p62 complex, a complex at least composed of NUP62, NUP54, and NUP58. Interacts with NUTF2. Interacts with SRP1-alpha and Importin p97 proteins when they are together, but not with SRP1-alpha protein alone. O-glycosylated.

Its subcellular location is the nucleus. It is found in the nuclear pore complex. The protein resides in the nucleus membrane. In terms of biological role, component of the nuclear pore complex, a complex required for the trafficking across the nuclear membrane. The sequence is that of Nucleoporin p58/p45 from Homo sapiens (Human).